The primary structure comprises 176 residues: Ferritin, higher subunit (176 aa).

In terms of domain architecture, Ferritin-like diiron spans 7 to 156; sequence QNFHRDCEAA…DYITNLKRLG (150 aa). Residues Glu-24, Glu-58, Glu-59, His-62, Glu-104, and Gln-138 each contribute to the Fe cation site.

The protein belongs to the ferritin family. Oligomer of 24 subunits. The functional molecule is roughly spherical and contains a central cavity into which the polymeric mineral iron core is deposited.

It carries out the reaction 4 Fe(2+) + O2 + 4 H(+) = 4 Fe(3+) + 2 H2O. Its function is as follows. Stores iron in a soluble, non-toxic, readily available form. Important for iron homeostasis. Has ferroxidase activity. Iron is taken up in the ferrous form and deposited as ferric hydroxides after oxidation. This chain is Ferritin, higher subunit, found in Aquarana catesbeiana (American bullfrog).